The primary structure comprises 344 residues: Phosphate acyltransferase (344 aa).

Belongs to the PlsX family. As to quaternary structure, homodimer. Probably interacts with PlsY.

It is found in the cytoplasm. The enzyme catalyses a fatty acyl-[ACP] + phosphate = an acyl phosphate + holo-[ACP]. It participates in lipid metabolism; phospholipid metabolism. In terms of biological role, catalyzes the reversible formation of acyl-phosphate (acyl-PO(4)) from acyl-[acyl-carrier-protein] (acyl-ACP). This enzyme utilizes acyl-ACP as fatty acyl donor, but not acyl-CoA. The protein is Phosphate acyltransferase of Thermosynechococcus vestitus (strain NIES-2133 / IAM M-273 / BP-1).